A 109-amino-acid polypeptide reads, in one-letter code: Probable cytochrome b-c1 complex subunit 7 (109 aa).

Belongs to the UQCRB/QCR7 family. Component of the ubiquinol-cytochrome c oxidoreductase (cytochrome b-c1 complex, complex III, CIII), a multisubunit enzyme composed of 3 respiratory subunits cytochrome b, cytochrome c1 and Rieske protein, 2 core protein subunits, and additional low-molecular weight protein subunits. The complex exists as an obligatory dimer and forms supercomplexes (SCs) in the inner mitochondrial membrane with cytochrome c oxidase (complex IV, CIV).

It localises to the mitochondrion inner membrane. In terms of biological role, component of the ubiquinol-cytochrome c oxidoreductase, a multisubunit transmembrane complex that is part of the mitochondrial electron transport chain which drives oxidative phosphorylation. The respiratory chain contains 3 multisubunit complexes succinate dehydrogenase (complex II, CII), ubiquinol-cytochrome c oxidoreductase (cytochrome b-c1 complex, complex III, CIII) and cytochrome c oxidase (complex IV, CIV), that cooperate to transfer electrons derived from NADH and succinate to molecular oxygen, creating an electrochemical gradient over the inner membrane that drives transmembrane transport and the ATP synthase. The cytochrome b-c1 complex catalyzes electron transfer from ubiquinol to cytochrome c, linking this redox reaction to translocation of protons across the mitochondrial inner membrane, with protons being carried across the membrane as hydrogens on the quinol. In the process called Q cycle, 2 protons are consumed from the matrix, 4 protons are released into the intermembrane space and 2 electrons are passed to cytochrome c. This is Probable cytochrome b-c1 complex subunit 7 from Dictyostelium discoideum (Social amoeba).